Consider the following 244-residue polypeptide: Claudin-12 (244 aa).

Residues 1-10 (MGCRDVHAAT) lie on the Cytoplasmic side of the membrane. The chain crosses the membrane as a helical span at residues 11–31 (VLSFLCGIASVAGLFAGTLLP). The Extracellular portion of the chain corresponds to 32 to 87 (NWRKLRLITFNRNEKNLTVYTGLWVKCARYDGGNDCLMYDAAWYSSVDQLDLRVLQ). Residues 88–108 (FALPLSILIAMGALLLCLIGM) traverse the membrane as a helical segment. The Cytoplasmic segment spans residues 109–135 (CNTAFRSSVPNIKLAKCLVNSAGCHLV). The helical transmembrane segment at 136 to 156 (AGLLFFLAGTVSLSPSIWVIF) threads the bilayer. Over 157-174 (YNIHLNRKFEPVFAFDYA) the chain is Extracellular. The helical transmembrane segment at 175–195 (VYVTVASAGGLFMTALLLFIW) threads the bilayer. Topologically, residues 196 to 244 (YCACKSLPSPFWQPLYSHPPGMHTYSQPYSARSRLSAIEIDIPVVSHTT) are cytoplasmic. Ser-228 and Ser-231 each carry phosphoserine.

This sequence belongs to the claudin family. In terms of assembly, interacts with OCLN.

The protein resides in the cell junction. Its subcellular location is the tight junction. It is found in the cell membrane. Plays a major role in tight junction-specific obliteration of the intercellular space, through calcium-independent cell-adhesion activity. The polypeptide is Claudin-12 (CLDN12) (Bos taurus (Bovine)).